The following is a 153-amino-acid chain: ORM1-like protein 3 (153 aa).

The segment at 1–17 (MNVGTAHSEVNPNTRVM) is important for ceramide level-sensing. At 1–21 (MNVGTAHSEVNPNTRVMNSRG) the chain is on the cytoplasmic side. A run of 2 helical transmembrane segments spans residues 22 to 42 (IWLS…SIPF) and 43 to 63 (VSVP…MYIF). Residues 64-94 (LHTVKGTPFETPDQGKARLLTHWEQMDYGVQ) are Cytoplasmic-facing. A helical transmembrane segment spans residues 95–117 (FTASRKFLTITPIVLYFLTSFYT). Residues 118 to 121 (KYDQ) lie on the Extracellular side of the membrane. Residues 122–142 (IHFILNTVSLMSVLIPKLPQL) form a helical membrane-spanning segment. Pro137 carries the post-translational modification Hydroxyproline. The Cytoplasmic segment spans residues 143 to 153 (HGVRIFGINKY).

It belongs to the ORM family. In terms of assembly, ceramide-sensitive subunit of the serine palmitoyltransferase (SPT) complex, which is also composed of SPTLC1, SPTLC2/3 and SPTSSA/B. Post-translationally, when hydroxylated at Pro-137, ubiquitinated via 'Lys-48'-linkage, leading to proteasomal degradation. In endothelial cells, ORMDL3 proteasomal degradation is controlled by the sphingosine 1-phosphate receptor signaling pathway.

The protein localises to the endoplasmic reticulum membrane. Its function is as follows. Plays an essential role in the homeostatic regulation of sphingolipid de novo biosynthesis by modulating the activity of the serine palmitoyltransferase (SPT) in response to ceramide levels. When complexed to SPT, the binding of ceramides to its N-terminus stabilizes a conformation that block SPT substrate entry, hence preventing SPT catalytic activity. Through this mechanism, maintains ceramide levels at sufficient concentrations for the production of complex sphingolipids, but which prevents the accumulation of ceramides to levels that trigger apoptosis. This is ORM1-like protein 3 (ORMDL3) from Bos taurus (Bovine).